The chain runs to 284 residues: Bifunctional protein FolD (284 aa).

NADP(+) is bound by residues 166–168, serine 191, and isoleucine 232; that span reads GAS.

Belongs to the tetrahydrofolate dehydrogenase/cyclohydrolase family. Homodimer.

The catalysed reaction is (6R)-5,10-methylene-5,6,7,8-tetrahydrofolate + NADP(+) = (6R)-5,10-methenyltetrahydrofolate + NADPH. It catalyses the reaction (6R)-5,10-methenyltetrahydrofolate + H2O = (6R)-10-formyltetrahydrofolate + H(+). It participates in one-carbon metabolism; tetrahydrofolate interconversion. Functionally, catalyzes the oxidation of 5,10-methylenetetrahydrofolate to 5,10-methenyltetrahydrofolate and then the hydrolysis of 5,10-methenyltetrahydrofolate to 10-formyltetrahydrofolate. This Neisseria meningitidis serogroup B (strain ATCC BAA-335 / MC58) protein is Bifunctional protein FolD.